The chain runs to 360 residues: Histidinol-phosphate aminotransferase (360 aa).

Residue Lys213 is modified to N6-(pyridoxal phosphate)lysine.

The protein belongs to the class-II pyridoxal-phosphate-dependent aminotransferase family. Histidinol-phosphate aminotransferase subfamily. In terms of assembly, homodimer. The cofactor is pyridoxal 5'-phosphate.

It catalyses the reaction L-histidinol phosphate + 2-oxoglutarate = 3-(imidazol-4-yl)-2-oxopropyl phosphate + L-glutamate. It functions in the pathway amino-acid biosynthesis; L-histidine biosynthesis; L-histidine from 5-phospho-alpha-D-ribose 1-diphosphate: step 7/9. The polypeptide is Histidinol-phosphate aminotransferase (Baumannia cicadellinicola subsp. Homalodisca coagulata).